The primary structure comprises 601 residues: MAGAAGPGSGPGAAGGDGDDSLYPIAVLIDELRNEDVQLRLNSIKKLSTIALALGVERTRTELLPFLTDTIYDEDEVLLALAEQLGNFTGLVGGPDFAHCLLPPLESLATVEETVVRDKAVESLRQISQEHTPVALEAHFVPLVKRLASGDWFTSRTSACGLFSVCYPRASNAVKAEIRQHFRSLCSDDTPMVRRAAASKLGEFAKVLELDSVKTEIVPLFTNLASDEQDSVRLLAVEACVSIAQLLSQEDLEALVMPTLRQAAEDKSWRVRYMVADKFSELQKAVGPKIALSDLIPAFQSLLRDCEAEVRAAAAHKVRELCENLPAEGRETVIMNQILPYIKELVSDTNQHVKSALASVIMGLSTVLGKENTIEHLLPLFLAQLKDECPEVRLNIISNLDCVNEVIGIRQLSQSLLPAIVELAEDAKWRVRLAIIEYMPLLAGQLGVEFFDEKLNSLCMAWLVDHVYAIREAATNNLMKLVQKFGTEWAQNTIVPKVLVMANDPNYLHRMTTLFCINALSEACGKEITTKQMLPIVLKMAGDQVANVRFNVAKSLQKIGPILDTNALQGEVKPVLQKLGQDEDMDVKYFAQEAISVLALA.

Ala2 carries the N-acetylalanine modification. 15 HEAT repeats span residues 20 to 58 (DSLY…GVER), 59 to 96 (TRTE…GGPD), 97 to 135 (FAHC…TPVA), 136 to 173 (LEAH…ASNA), 174 to 212 (VKAE…ELDS), 213 to 251 (VKTE…SQED), 252 to 290 (LEAL…GPKI), 291 to 333 (ALSD…RETV), 334 to 372 (IMNQ…GKEN), 373 to 411 (TIEH…GIRQ), 412 to 450 (LSQS…GVEF), 451 to 489 (FDEK…GTEW), 490 to 528 (AQNT…GKEI), 529 to 567 (TTKQ…DTNA), and 568 to 601 (LQGE…LALA).

The protein belongs to the phosphatase 2A regulatory subunit A family. In terms of assembly, PP2A consists of a common heterodimeric core enzyme, composed of a 36 kDa catalytic subunit (subunit C) and a 65 kDa constant regulatory subunit (PR65 or subunit A), that associates with a variety of regulatory subunits. Proteins that associate with the core dimer include three families of regulatory subunits B (the R2/B/PR55/B55, R3/B''/PR72/PR130/PR59 and R5/B'/B56 families), the 48 kDa variable regulatory subunit, viral proteins, and cell signaling molecules. Interacts with IPO9. Interacts with SGO1. Interacts with RAF1.

Its function is as follows. The PR65 subunit of protein phosphatase 2A serves as a scaffolding molecule to coordinate the assembly of the catalytic subunit and a variable regulatory B subunit. This is Serine/threonine-protein phosphatase 2A 65 kDa regulatory subunit A beta isoform (Ppp2r1b) from Mus musculus (Mouse).